The following is a 466-amino-acid chain: Asparagine--tRNA ligase (466 aa).

It belongs to the class-II aminoacyl-tRNA synthetase family. In terms of assembly, homodimer.

It is found in the cytoplasm. The enzyme catalyses tRNA(Asn) + L-asparagine + ATP = L-asparaginyl-tRNA(Asn) + AMP + diphosphate + H(+). In Shewanella sediminis (strain HAW-EB3), this protein is Asparagine--tRNA ligase.